The primary structure comprises 93 residues: Large ribosomal subunit protein uL23cz/uL23cy (93 aa).

Belongs to the universal ribosomal protein uL23 family. In terms of assembly, part of the 50S ribosomal subunit.

It is found in the plastid. The protein localises to the chloroplast. Functionally, binds to 23S rRNA. The protein is Large ribosomal subunit protein uL23cz/uL23cy (rpl23-A) of Coffea arabica (Arabian coffee).